We begin with the raw amino-acid sequence, 298 residues long: Nucleotide-binding protein RSKD131_3085 (298 aa).

11–18 (GPSGAGRT) lines the ATP pocket. 58-61 (DVRN) contacts GTP.

Belongs to the RapZ-like family.

Functionally, displays ATPase and GTPase activities. This is Nucleotide-binding protein RSKD131_3085 from Cereibacter sphaeroides (strain KD131 / KCTC 12085) (Rhodobacter sphaeroides).